Consider the following 130-residue polypeptide: Glycoprotein hormone beta-5 (130 aa).

An N-terminal signal peptide occupies residues 1-24; that stretch reads MKLAFLFLGPMALLLLAGYGCVLG. 5 disulfides stabilise this stretch: cysteine 36–cysteine 84, cysteine 50–cysteine 99, cysteine 60–cysteine 115, cysteine 64–cysteine 117, and cysteine 120–cysteine 127. An N-linked (GlcNAc...) asparagine glycan is attached at asparagine 87.

Belongs to the glycoprotein hormones subunit beta family. In terms of assembly, heterodimer with GPHA2; this heterodimer interacts with thyroid-stimulating hormone receptor (TSHR), and hence stimulates cAMP production. Post-translationally, N-glycosylated. In terms of tissue distribution, highly expressed in brain and at low levels in pituitary. Also found in retina, testis and skin but not in pancreas, parotid, kidney, stomach, liver, colon, small intestine, thyroid, brain or adrenal gland. In pituitary, colocalizes with ACTH, suggesting that it is located in corticotrophs.

Its subcellular location is the secreted. Functionally, functions as a heterodimeric glycoprotein hormone with GPHA2 able to bind and activate the thyroid-stimulating hormone receptor (TSHR), leading to increased cAMP production. Plays a central role in controlling thyroid cell metabolism. The chain is Glycoprotein hormone beta-5 (GPHB5) from Homo sapiens (Human).